The sequence spans 730 residues: Cyclin-T2 (730 aa).

The interval 1-300 (MASGRGASSR…SVTGVPTNPS (300 aa)) is interaction with MDFIC and MDFI. In terms of domain architecture, Cyclin N-terminal spans 12 to 147 (FFTREQLENT…IMLQTLGFEI (136 aa)). The segment at 250 to 300 (RLKKIRNWRANQAARKPKVDGQVSETPLLGSSLVQNSILVDSVTGVPTNPS) is interaction with POLR2A. Polar residues-rich tracts occupy residues 341–350 (TSYGLSSHQE) and 360–389 (TEQL…SISL). The segment at 341–430 (TSYGLSSHQE…GPISTTPGII (90 aa)) is disordered. The segment covering 398 to 412 (DKISDHSSVKQEYTH) has biased composition (basic and acidic residues). K407 participates in a covalent cross-link: Glycyl lysine isopeptide (Lys-Gly) (interchain with G-Cter in SUMO2). Position 480 is a phosphoserine (S480). Positions 497–652 (DKKEKSGSLK…SSSSSSSSVK (156 aa)) are disordered. Basic and acidic residues-rich tracts occupy residues 517–543 (SASK…EGSG) and 552–565 (ISRD…EHPS). A compositionally biased stretch (basic residues) spans 566–578 (SRHHTSSHKHSHS). Residues 579–588 (HSGSSSGGSK) are compositionally biased toward low complexity. S601 bears the Phosphoserine mark. 2 stretches are compositionally biased toward low complexity: residues 606–616 (SSDGISSSSSS) and 637–652 (SSKS…SSVK).

Belongs to the cyclin family. Cyclin C subfamily. In terms of assembly, interacts with CDK9 to form P-TEFb. Interacts with POLR2A (via the C-terminal domain (CTD)); mediates transcriptional activity. Interacts with HEXIM1; mediates formation of a tripartite complex with KPNA2. Interacts with HEXIM2. Interacts with PKN1; enhances MYOD1-dependent transcription. P-TEFB complex interacts with RB1; promotes phosphorylation of RB1. P-TEFB complex interacts with MYOD1; promotes the transcriptional activity of MYOD1 through its CDK9-mediated phosphorylation. Interacts with MDFI and MDFIC. Interacts with MON1B; down-regulates CCNT2-mediated activation of viral promoters during herpes simplex virus 1/HHV-1 infection. As to quaternary structure, (Microbial infection) Interacts with HIV-2 and SIV Tat. Does not bind efficiently to the transactivation domain of the HIV-1 Tat. As to expression, ubiquitously expressed.

The protein localises to the cytoplasm. It localises to the perinuclear region. It is found in the nucleus. Its function is as follows. Regulatory subunit of the cyclin-dependent kinase pair (CDK9/cyclin T) complex, also called positive transcription elongation factor B (P-TEFB), which is proposed to facilitate the transition from abortive to production elongation by phosphorylating the CTD (carboxy-terminal domain) of the large subunit of RNA polymerase II (RNAP II). The activity of this complex is regulated by binding with 7SK snRNA. Plays a role during muscle differentiation; P-TEFB complex interacts with MYOD1; this tripartite complex promotes the transcriptional activity of MYOD1 through its CDK9-mediated phosphorylation and binds the chromatin of promoters and enhancers of muscle-specific genes; this event correlates with hyperphosphorylation of the CTD domain of RNA pol II. In addition, enhances MYOD1-dependent transcription through interaction with PKN1. Involved in early embryo development. Functionally, (Microbial infection) Promotes transcriptional activation of early and late herpes simplex virus 1/HHV-1 promoters. This is Cyclin-T2 from Homo sapiens (Human).